Consider the following 298-residue polypeptide: MAGDLTPSLFLKYGFGGALSCSITHSLVVPLDVVKTLLQTNPGKYTGMMNGFSTVIKEQGPSGLLQGLGPTAVGYALQGFLKFGFYEVFKKTYADAVGEKADQFRIPIWLAASATAEVIADIALCPNEAVRIRLVAEPTFAKSPVEAFGKIFKQEGVLGFYKGLPPILLKQVPYTMAKFAVFEFTAENVYKGLAASGKPKESLTDGQKLSVSLGSGIVAGIVAAIVSQPADTILSKINQEKTDGGVVKAIGNIMRRLGVRGLFLGLPTRCFMVGTLTAGQFFIYDGIKQMLGLTPAKK.

The Mitochondrial intermembrane segment spans residues 1–13 (MAGDLTPSLFLKY). 3 Solcar repeats span residues 8 to 92 (SLFL…FKKT), 104 to 188 (FRIP…TAEN), and 207 to 290 (QKLS…IKQM). Residues 14-34 (GFGGALSCSITHSLVVPLDVV) form a helical membrane-spanning segment. At 35–60 (KTLLQTNPGKYTGMMNGFSTVIKEQG) the chain is on the mitochondrial matrix side. Residues 61-81 (PSGLLQGLGPTAVGYALQGFL) traverse the membrane as a helical segment. Topologically, residues 82–105 (KFGFYEVFKKTYADAVGEKADQFR) are mitochondrial intermembrane. Residues 106-126 (IPIWLAASATAEVIADIALCP) traverse the membrane as a helical segment. Residues 127 to 162 (NEAVRIRLVAEPTFAKSPVEAFGKIFKQEGVLGFYK) lie on the Mitochondrial matrix side of the membrane. The helical transmembrane segment at 163–179 (GLPPILLKQVPYTMAKF) threads the bilayer. Over 180 to 208 (AVFEFTAENVYKGLAASGKPKESLTDGQK) the chain is Mitochondrial intermembrane. The chain crosses the membrane as a helical span at residues 209 to 229 (LSVSLGSGIVAGIVAAIVSQP). Residues 230–262 (ADTILSKINQEKTDGGVVKAIGNIMRRLGVRGL) lie on the Mitochondrial matrix side of the membrane. The helical transmembrane segment at 263-283 (FLGLPTRCFMVGTLTAGQFFI) threads the bilayer. Topologically, residues 284–298 (YDGIKQMLGLTPAKK) are mitochondrial intermembrane.

This sequence belongs to the mitochondrial carrier (TC 2.A.29) family.

It is found in the mitochondrion inner membrane. Its function is as follows. Mitochondrial solute carriers shuttle metabolites, nucleotides, and cofactors through the mitochondrial inner membrane. Transports phosphate groups from the cytosol to the mitochondrial matrix. Phosphate is cotransported with H(+). In Dictyostelium discoideum (Social amoeba), this protein is Mitochondrial substrate carrier family protein N (mcfN).